The primary structure comprises 652 residues: DNA ligase (652 aa).

Residues 29–33 (DAEYD), 78–79 (SL), and E107 each bind NAD(+). K109 acts as the N6-AMP-lysine intermediate in catalysis. R130, E164, K278, and K302 together coordinate NAD(+). C395, C398, C413, and C418 together coordinate Zn(2+). In terms of domain architecture, BRCT spans 577–652 (DENAALSGMT…IKDEAWLESL (76 aa)).

The protein belongs to the NAD-dependent DNA ligase family. LigA subfamily. It depends on Mg(2+) as a cofactor. Mn(2+) serves as cofactor.

The enzyme catalyses NAD(+) + (deoxyribonucleotide)n-3'-hydroxyl + 5'-phospho-(deoxyribonucleotide)m = (deoxyribonucleotide)n+m + AMP + beta-nicotinamide D-nucleotide.. Functionally, DNA ligase that catalyzes the formation of phosphodiester linkages between 5'-phosphoryl and 3'-hydroxyl groups in double-stranded DNA using NAD as a coenzyme and as the energy source for the reaction. It is essential for DNA replication and repair of damaged DNA. This is DNA ligase from Streptococcus suis (strain 05ZYH33).